Consider the following 86-residue polypeptide: Small ribosomal subunit protein uS17 (86 aa).

The protein belongs to the universal ribosomal protein uS17 family. As to quaternary structure, part of the 30S ribosomal subunit.

One of the primary rRNA binding proteins, it binds specifically to the 5'-end of 16S ribosomal RNA. The protein is Small ribosomal subunit protein uS17 of Streptococcus mutans serotype c (strain ATCC 700610 / UA159).